Here is a 479-residue protein sequence, read N- to C-terminus: ATP synthase subunit beta (479 aa).

ATP is bound at residue 168-175 (GGAGVGKT).

Belongs to the ATPase alpha/beta chains family. In terms of assembly, F-type ATPases have 2 components, CF(1) - the catalytic core - and CF(0) - the membrane proton channel. CF(1) has five subunits: alpha(3), beta(3), gamma(1), delta(1), epsilon(1). CF(0) has three main subunits: a(1), b(2) and c(9-12). The alpha and beta chains form an alternating ring which encloses part of the gamma chain. CF(1) is attached to CF(0) by a central stalk formed by the gamma and epsilon chains, while a peripheral stalk is formed by the delta and b chains.

Its subcellular location is the cell membrane. The enzyme catalyses ATP + H2O + 4 H(+)(in) = ADP + phosphate + 5 H(+)(out). Functionally, produces ATP from ADP in the presence of a proton gradient across the membrane. The catalytic sites are hosted primarily by the beta subunits. This Frankia alni (strain DSM 45986 / CECT 9034 / ACN14a) protein is ATP synthase subunit beta.